A 329-amino-acid polypeptide reads, in one-letter code: Malate dehydrogenase (329 aa).

Position 13–19 (13–19 (GAAGNIS)) interacts with NAD(+). Substrate is bound by residues Arg-94 and Arg-100. NAD(+)-binding positions include Asn-107, Gln-114, and 131–133 (VGN). Substrate contacts are provided by Asn-133 and Arg-164. Catalysis depends on His-189, which acts as the Proton acceptor.

Belongs to the LDH/MDH superfamily. MDH type 2 family.

It catalyses the reaction (S)-malate + NAD(+) = oxaloacetate + NADH + H(+). Its function is as follows. Catalyzes the reversible oxidation of malate to oxaloacetate. This Psychrobacter arcticus (strain DSM 17307 / VKM B-2377 / 273-4) protein is Malate dehydrogenase.